The sequence spans 138 residues: Large ribosomal subunit protein uL16 (138 aa).

It belongs to the universal ribosomal protein uL16 family. As to quaternary structure, part of the 50S ribosomal subunit.

Functionally, binds 23S rRNA and is also seen to make contacts with the A and possibly P site tRNAs. This Corynebacterium kroppenstedtii (strain DSM 44385 / JCM 11950 / CIP 105744 / CCUG 35717) protein is Large ribosomal subunit protein uL16.